We begin with the raw amino-acid sequence, 105 residues long: MIASKFKIGQQVRHKLLGYLGVVIDIDPEYSLEKPTLDEVTKNDSLRKFPWYHVVMEDDEGKPIHTYLAEIQLGYEDTVIHPEQSTLDDLAESIRLQLQTPRLRN.

The protein belongs to the HspQ family.

Its subcellular location is the cytoplasm. Functionally, involved in the degradation of certain denaturated proteins, including DnaA, during heat shock stress. The protein is Heat shock protein HspQ of Blochmanniella floridana.